The chain runs to 253 residues: Flagellar brake protein YcgR (253 aa).

Residues 120–239 (QRRDFYRFAT…NEGLINRYVY (120 aa)) form the PilZ domain.

The protein belongs to the YcgR family. Monomer. Interacts with the flagellar basal bodies.

Its subcellular location is the bacterial flagellum basal body. Acts as a flagellar brake, regulating swimming and swarming in a bis-(3'-5') cyclic diguanylic acid (c-di-GMP)-dependent manner. Binds 1 c-di-GMP dimer per subunit. Increasing levels of c-di-GMP lead to decreased motility. The polypeptide is Flagellar brake protein YcgR (Methylotenera mobilis (strain JLW8 / ATCC BAA-1282 / DSM 17540)).